Reading from the N-terminus, the 376-residue chain is Probable allantoicase (376 aa).

It belongs to the allantoicase family.

It catalyses the reaction allantoate + H2O = (S)-ureidoglycolate + urea. The protein operates within nitrogen metabolism; (S)-allantoin degradation; (S)-ureidoglycolate from allantoate (aminidohydrolase route): step 1/1. This chain is Probable allantoicase, found in Streptomyces avermitilis (strain ATCC 31267 / DSM 46492 / JCM 5070 / NBRC 14893 / NCIMB 12804 / NRRL 8165 / MA-4680).